Here is a 193-residue protein sequence, read N- to C-terminus: Ion-translocating oxidoreductase complex subunit A (193 aa).

A run of 6 helical transmembrane segments spans residues Ala-5 to Leu-25, Leu-39 to Leu-59, Trp-62 to Ala-82, Ser-102 to Leu-122, Val-134 to Leu-154, and Ala-172 to Ala-192.

This sequence belongs to the NqrDE/RnfAE family. The complex is composed of six subunits: RnfA, RnfB, RnfC, RnfD, RnfE and RnfG.

Its subcellular location is the cell inner membrane. Functionally, part of a membrane-bound complex that couples electron transfer with translocation of ions across the membrane. In Aromatoleum aromaticum (strain DSM 19018 / LMG 30748 / EbN1) (Azoarcus sp. (strain EbN1)), this protein is Ion-translocating oxidoreductase complex subunit A.